Reading from the N-terminus, the 470-residue chain is Putative multidrug resistance protein MdtD (470 aa).

Over 1-11 (MTELPDNTRWQ) the chain is Periplasmic. A helical membrane pass occupies residues 12–32 (LWIVALGFFMQSLDTTIVNTA). Topologically, residues 33-48 (LPSMAKSLGESPLHMH) are cytoplasmic. A helical transmembrane segment spans residues 49-69 (MVVVSYVLTVAVMLPASGWLA). Over 70-76 (DKIGVRN) the chain is Periplasmic. The chain crosses the membrane as a helical span at residues 77–97 (IFFAAIVLFTLGSLFCALSGT). Over 98 to 101 (LNQL) the chain is Cytoplasmic. The chain crosses the membrane as a helical span at residues 102 to 124 (VLARVLQGVGGAMMVPVGRLTVM). Topologically, residues 125 to 137 (KIVPRAQYMAAMT) are periplasmic. A helical transmembrane segment spans residues 138–158 (FVTLPGQIGPLLGPALGGVLV). Residues 159–164 (EYASWH) lie on the Cytoplasmic side of the membrane. Residues 165 to 185 (WIFLINIPVGIVGAMATFMLM) traverse the membrane as a helical segment. At 186-196 (PNYTIETRRFD) the chain is on the periplasmic side. A helical transmembrane segment spans residues 197 to 217 (LPGFLLLAIGMAVLTLALDGS). The Cytoplasmic portion of the chain corresponds to 218 to 221 (KSMG). The helical transmembrane segment at 222 to 242 (ISPWTLAGLAAGGAAAILLYL) threads the bilayer. Topologically, residues 243–262 (LHAKKNSGALFSLRLFRTPT) are periplasmic. Residues 263 to 283 (FSLGLLGSFAGRIGSGMLPFM) traverse the membrane as a helical segment. Over 284 to 285 (TP) the chain is Cytoplasmic. A helical transmembrane segment spans residues 286–306 (VFLQIGLGFSPFHAGLMMIPM). Residues 307 to 341 (VLGSMGMKRIVVQIVNRFGYRRVLVATTLGLALVS) lie on the Periplasmic side of the membrane. A helical transmembrane segment spans residues 342–362 (LLFMSVALLGWYYLLPLVLLL). At 363–395 (QGMVNSARFSSMNTLTLKDLPDTLASSGNSLLS) the chain is on the cytoplasmic side. The helical transmembrane segment at 396–416 (MIMQLSMSIGVTIAGMLLGMF) threads the bilayer. Over 417 to 430 (GQQHIGIDSSATHH) the chain is Periplasmic. Residues 431 to 451 (VFMYTWLCMAVIIALPAIIFA) traverse the membrane as a helical segment. The Cytoplasmic portion of the chain corresponds to 452-470 (RVPNDTQQNMVISRRKRSL).

This sequence belongs to the major facilitator superfamily. TCR/Tet family.

The protein resides in the cell inner membrane. The protein is Putative multidrug resistance protein MdtD of Salmonella heidelberg (strain SL476).